The following is an 869-amino-acid chain: Serendipity locus protein H-1 (869 aa).

Basic and acidic residues predominate over residues 1–17; the sequence is MEGGKGEGKRMKEEAPS. Disordered regions lie at residues 1–32 and 134–165; these read MEGG…AGTP and FSVT…TPVK. Residues 146 to 164 are compositionally biased toward polar residues; the sequence is AFTNSPFKKTSSSGTSTPV. 8 C2H2-type zinc fingers span residues 269–293, 299–321, 331–352, 358–380, 386–408, 414–436, 442–464, and 470–493; these read HKCL…AAAH, YRCS…LKTH, KKCP…RKIH, YQCD…ARIH, YECP…QKYH, YRCE…NLVH, FACT…SNIH, and FKCN…RRRH. Disordered stretches follow at residues 554–573 and 617–652; these read TSTA…QPQQ and PKQT…SSLE. Low complexity predominate over residues 630-648; the sequence is APKQLQQKPQLLQQGQPQQ.

As to expression, distribution varies between nurse cells and the oocyte during oogenesis. Weakly expressed in follicle and border cells.

It is found in the nucleus. In terms of biological role, may belong to a complex set of multifingered proteins which play an important role in gene activation or regulation at early embryonic stages through a maximal accumulation of their transcripts (or protein product) in the mature oocyte. The sequence is that of Serendipity locus protein H-1 (wdn) from Drosophila melanogaster (Fruit fly).